Consider the following 239-residue polypeptide: MDTIGLFSVEAEHLFVEWVKKCIKKGDLTLFETLFNADPWIVNRCNKNKITVFMLICIYGRLDFLRFLFKQESYPGEIVNHYRRDKDGNSAWHYLAEKNNHLLLEEVLDYFGKNGIRVCFPNFNGVTPIMKAAMRGRTLSVLSLLKYGANPNRKDYLKGFTTWDWAVFTGHADLVKTLNKGYQKPLFMHFPLYKLDVFHRRFKKKPKIIITGCEDNVYEKLPEQNSNFLCVKKLNKYGK.

4 ANK repeats span residues 48-77, 87-116, 124-153, and 158-187; these read NKIT…YPGE, DGNS…KNGI, NGVT…NPNR, and KGFT…KPLF. The Nuclear localization signal motif lies at 81 to 87; sequence HYRRDKD. Positions 203–214 match the Nuclear localization signal motif; the sequence is KKKPKIIITGCE. A PxIxITxC motif; Interaction with host PPP3CA motif is present at residues 206-213; that stretch reads PKIIITGC. An FLCV motif motif is present at residues 228–231; the sequence is FLCV.

Belongs to the asfivirus A238L family. As to quaternary structure, interacts with host PPIA. Interacts with host PPP3CA/Calcineurin. Interacts with host RELA/p65; interaction of the 32 kDa form with host RELA results in the formation of a stable complex with NF-kappa-B. Interacts with host PPP3R1. Interacts with host EP300; this interaction inhibits the association of host EP300 with host RELA, JUN and NFATC2. Post-translationally, the protein exists in a 28 kDa and a 32 kDa form, probably due to post-translational modifications which are neither phosphorylation, nor sumoylation.

The protein resides in the host nucleus. It localises to the host cytoplasm. In terms of biological role, ikB-like protein that inhibits the binding of NF-kappa-B to DNA, thereby downregulating pro-inflammatory cytokine production. Forms a heterodimer with the NF-kappa-B subunit RELA/p65 and prevents the activation of the NF-kappa-B transcription factor. Inhibits calcineurin function, which is required for the induction of nuclear factor of activated T cells (NFAT)-dependent immune response genes. Prevents the binding of substrates to calcineurin without affecting the phosphatase activity. Does not contain the serine residues that are phosphorylated by host IkB kinase and thus is not degraded following stimulation of the NFkB pathway. The chain is IkB-like protein (A238L) from Ornithodoros (relapsing fever ticks).